A 707-amino-acid polypeptide reads, in one-letter code: Acyl-CoA ligase 891, peroxisomal (707 aa).

259–270 provides a ligand contact to ATP; that stretch reads INYTSGTTGPPK. Residues 525–549 form a fatty acid-binding region; that stretch reads DGWFRTGDVCTIDEKGRFIIIDRRK. The Peroxisome targeting signal signature appears at 705–707; the sequence is AKL.

The protein belongs to the ATP-dependent AMP-binding enzyme family.

It localises to the peroxisome matrix. It catalyses the reaction (4E,8E)-10-(4-hydroxy-6-methoxy-7-methyl-3-oxo-1,3-dihydro-2-benzofuran-5-yl)-4,8-dimethyldeca-4,8-dienoate + ATP + CoA = (4E,8E)-10-(4-hydroxy-6-methoxy-7-methyl-3-oxo-1,3-dihydro-2-benzofuran-5-yl)-4,8-dimethyldeca-4,8-dienoyl-CoA + AMP + diphosphate. It participates in secondary metabolite biosynthesis; terpenoid biosynthesis. In terms of biological role, acyl-CoA ligase involved in the biosynthesis of mycophenolic acid (MPA), the first isolated antibiotic natural product in the world obtained from a culture of Penicillium brevicompactum in 1893. The peroxisomal acyl-CoA ligase 891 converts the intermediate MFDHMP-3C into MFDHMP-3C-CoA which impairs its diffusion from the peroxisome. The first step of the pathway is the synthesis of 5-methylorsellinic acid (5MOA) by the cytosolic polyketide synthase mpaC. 5MOA is then converted to the phthalide compound 5,7-dihydroxy-4,6-dimethylphthalide (DHMP) by the endoplasmic reticulum-bound cytochrome P450 monooxygenase mpaDE. MpaDE first catalyzes hydroxylation of 5-MOA to 4,6-dihydroxy-2-(hydroxymethyl)-3-methylbenzoic acid (DHMB). MpaDE then acts as a lactone synthase that catalyzes the ring closure to convert DHMB into DHMP. The next step is the prenylation of DHMP by the Golgi apparatus-associated prenyltransferase mpaA to yield farnesyl-DHMP (FDHMP). The ER-bound oxygenase mpaB then mediates the oxidative cleavage the C19-C20 double bond in FDHMP to yield FDHMP-3C via a mycophenolic aldehyde intermediate. The O-methyltransferase mpaG catalyzes the methylation of FDHMP-3C to yield MFDHMP-3C. After the cytosolic methylation of FDHMP-3C, MFDHMP-3C enters into peroxisomes probably via free diffusion due to its low molecular weight. Upon a peroxisomal CoA ligation reaction, catalyzed by a beta-oxidation component enzyme acyl-CoA ligase ACL891, MFDHMP-3C-CoA would then be restricted to peroxisomes for the following beta-oxidation pathway steps. The peroxisomal beta-oxidation machinery than converts MFDHMP-3C-CoA into MPA_CoA, via a beta-oxidation chain-shortening process. Finally mpaH acts as a peroxisomal acyl-CoA hydrolase with high substrate specificity toward MPA-CoA to release the final product MPA. In Penicillium roqueforti (strain FM164), this protein is Acyl-CoA ligase 891, peroxisomal.